A 456-amino-acid chain; its full sequence is Iroquois-class homeodomain protein irx-2 (456 aa).

A DNA-binding region (homeobox; TALE-type) is located at residues 110–172; the sequence is DPAYRKNATR…NARRRLKKEN (63 aa). 3 disordered regions span residues 172–214, 246–320, and 434–456; these read NKMT…AEDE, CESG…PASK, and RPTNFESKKDPSEVCTVGVQPYP. 2 stretches are compositionally biased toward basic and acidic residues: residues 192-205 and 246-256; these read GERVKEEQSEKAQD and CESGSESKEKY. The segment covering 257–269 has biased composition (acidic residues); the sequence is DDDEDEEEGDEED. The segment covering 291 to 318 has biased composition (polar residues); that stretch reads NHQQDGSPRNSNKTSLDNGMSPSSQTPA.

It belongs to the TALE/IRO homeobox family. In terms of tissue distribution, expressed in the neural plate in overlapping patterns with other irx members, which all share an anterior border of expression. Also expressed in the placodes. Broadly expressed in the tailbud rhombencephalon (hindbrain). Outside the nervous system and at tailbud stages, expressed in the developing otic vesicle, branchial arches, prospective heart region and pronephros.

It localises to the nucleus. In terms of biological role, acts partially redundantly with other irx members in neural patterning. Required for formation of the posterior forebrain, midbrain, hindbrain, and to a lesser extent, spinal cord. Acts early in neural plate development to induce expression of some but not all proneural genes, and specify a neural precursor state. Also up-regulates repressors that prevent neuronal differentiation. Patterns the neuroectoderm in both the anterior/posterior and dorsal/ventral axes. Probably dispensable for pronephric kidney development. The protein is Iroquois-class homeodomain protein irx-2 of Xenopus tropicalis (Western clawed frog).